A 309-amino-acid polypeptide reads, in one-letter code: tRNA pseudouridine synthase B (309 aa).

Asp-39 (nucleophile) is an active-site residue.

This sequence belongs to the pseudouridine synthase TruB family. Type 1 subfamily.

It catalyses the reaction uridine(55) in tRNA = pseudouridine(55) in tRNA. In terms of biological role, responsible for synthesis of pseudouridine from uracil-55 in the psi GC loop of transfer RNAs. This chain is tRNA pseudouridine synthase B, found in Bacillus subtilis (strain 168).